The following is a 228-amino-acid chain: Ribose-5-phosphate isomerase A (228 aa).

Residues 32-35, 85-88, and 98-101 contribute to the substrate site; these read TGST, DGAD, and KGGG. Glu-107 functions as the Proton acceptor in the catalytic mechanism. Lys-125 provides a ligand contact to substrate.

It belongs to the ribose 5-phosphate isomerase family. As to quaternary structure, homodimer.

It carries out the reaction aldehydo-D-ribose 5-phosphate = D-ribulose 5-phosphate. Its pathway is carbohydrate degradation; pentose phosphate pathway; D-ribose 5-phosphate from D-ribulose 5-phosphate (non-oxidative stage): step 1/1. Its function is as follows. Catalyzes the reversible conversion of ribose-5-phosphate to ribulose 5-phosphate. The protein is Ribose-5-phosphate isomerase A of Ralstonia nicotianae (strain ATCC BAA-1114 / GMI1000) (Ralstonia solanacearum).